Here is a 246-residue protein sequence, read N- to C-terminus: Ly6/PLAUR domain-containing protein 4 (246 aa).

Positions 1 to 26 are cleaved as a signal peptide; it reads MILQAWRSLQLLYLLEAISLLPCTEA. Asn117 carries an N-linked (GlcNAc...) asparagine glycan. In terms of domain architecture, UPAR/Ly6 spans 142 to 223; that stretch reads CPSCVGKHDQ…INVLDKSEAV (82 aa). Ala225 carries the GPI-anchor amidated alanine lipid modification. Positions 226–246 are cleaved as a propeptide — removed in mature form; sequence GHCSQGISWSVLLCLLILLRD.

It is found in the cell membrane. This chain is Ly6/PLAUR domain-containing protein 4 (Lypd4), found in Mus musculus (Mouse).